The sequence spans 284 residues: Chaperone protein dnaJ 6 (284 aa).

Disordered regions lie at residues 1-30 (MGRK…ETSL), 196-221 (NKIS…AKDS), and 252-284 (GGDA…SRGK). Residues 3–6 (RKKK) carry the Nuclear localization signal motif. Residues 29-94 (SLYEVLGVER…EKRAVYDQTG (66 aa)) form the J domain. A Nuclear localization signal motif is present at residues 209–215 (RKRKKKK). The span at 255-265 (AEAEPTEEEFE) shows a compositional bias: acidic residues. The segment covering 266 to 275 (AAQRRIESKR) has biased composition (basic and acidic residues).

Belongs to the DnaJ family. C/III subfamily. Highly expressed in leaves, flowers and siliques, and to lower extent in roots.

The protein localises to the nucleus. Functionally, plays a continuous role in plant development probably in the structural organization of compartments. The polypeptide is Chaperone protein dnaJ 6 (ATJ6) (Arabidopsis thaliana (Mouse-ear cress)).